A 194-amino-acid polypeptide reads, in one-letter code: ATP-dependent Clp protease proteolytic subunit (194 aa).

Catalysis depends on Ser98, which acts as the Nucleophile. His123 is a catalytic residue.

This sequence belongs to the peptidase S14 family. As to quaternary structure, fourteen ClpP subunits assemble into 2 heptameric rings which stack back to back to give a disk-like structure with a central cavity, resembling the structure of eukaryotic proteasomes.

It localises to the cytoplasm. It catalyses the reaction Hydrolysis of proteins to small peptides in the presence of ATP and magnesium. alpha-casein is the usual test substrate. In the absence of ATP, only oligopeptides shorter than five residues are hydrolyzed (such as succinyl-Leu-Tyr-|-NHMec, and Leu-Tyr-Leu-|-Tyr-Trp, in which cleavage of the -Tyr-|-Leu- and -Tyr-|-Trp bonds also occurs).. In terms of biological role, cleaves peptides in various proteins in a process that requires ATP hydrolysis. Has a chymotrypsin-like activity. Plays a major role in the degradation of misfolded proteins. In Wigglesworthia glossinidia brevipalpis, this protein is ATP-dependent Clp protease proteolytic subunit.